Reading from the N-terminus, the 350-residue chain is uncharacterized protein (350 aa).

The signal sequence occupies residues 1 to 26; it reads MKKSGWLVVALIALVVLGVVTSIAVN.

This is an uncharacterized protein from Archaeoglobus fulgidus (strain ATCC 49558 / DSM 4304 / JCM 9628 / NBRC 100126 / VC-16).